The following is a 42-amino-acid chain: Large ribosomal subunit protein bL36 (42 aa).

The protein belongs to the bacterial ribosomal protein bL36 family.

This chain is Large ribosomal subunit protein bL36, found in Wolbachia pipientis wMel.